The primary structure comprises 232 residues: 7-cyano-7-deazaguanine synthase (232 aa).

8–18 (FSGGQDSTTCL) serves as a coordination point for ATP. Residues cysteine 189, cysteine 198, cysteine 201, and cysteine 204 each contribute to the Zn(2+) site.

This sequence belongs to the QueC family. Zn(2+) serves as cofactor.

The catalysed reaction is 7-carboxy-7-deazaguanine + NH4(+) + ATP = 7-cyano-7-deazaguanine + ADP + phosphate + H2O + H(+). It functions in the pathway purine metabolism; 7-cyano-7-deazaguanine biosynthesis. Functionally, catalyzes the ATP-dependent conversion of 7-carboxy-7-deazaguanine (CDG) to 7-cyano-7-deazaguanine (preQ(0)). This is 7-cyano-7-deazaguanine synthase from Yersinia enterocolitica serotype O:8 / biotype 1B (strain NCTC 13174 / 8081).